Reading from the N-terminus, the 67-residue chain is Large ribosomal subunit protein uL29 (67 aa).

The protein belongs to the universal ribosomal protein uL29 family.

The chain is Large ribosomal subunit protein uL29 from Magnetococcus marinus (strain ATCC BAA-1437 / JCM 17883 / MC-1).